We begin with the raw amino-acid sequence, 607 residues long: Guanine nucleotide-binding protein-like 1 (607 aa).

Residues 1-14 (MPRKKPFSVKQKKK) are compositionally biased toward basic residues. Residues 1–81 (MPRKKPFSVK…GPRGYDPNRY (81 aa)) form a disordered region. Over residues 15–26 (QLQDKRERKRGL) the composition is skewed to basic and acidic residues. Residues Ser32, Ser33, and Ser34 each carry the phosphoserine modification. Residues Thr48 and Thr50 each carry the phosphothreonine modification. Phosphoserine is present on residues Ser51 and Ser68. Residues 178–418 (WRQLWRVLEM…LCDCPGLIFP (241 aa)) enclose the CP-type G domain. Position 225 to 228 (225 to 228 (NKVD)) interacts with GTP. Phosphoserine is present on Ser324. Residues 367–374 (GFPNVGKS) and 411–415 (DCPGL) contribute to the GTP site. The disordered stretch occupies residues 547-607 (GPAGDEEEEE…PYALLGEDEC (61 aa)). Over residues 550–584 (GDEEEEEEEELSSSCEEEGEEDRDADEEGEGDEDT) the composition is skewed to acidic residues. Phosphoserine is present on residues Ser561, Ser562, and Ser563.

The protein belongs to the TRAFAC class YlqF/YawG GTPase family.

Functionally, possible regulatory or functional link with the histocompatibility cluster. In Pongo abelii (Sumatran orangutan), this protein is Guanine nucleotide-binding protein-like 1 (GNL1).